Reading from the N-terminus, the 379-residue chain is Cysteine-rich receptor-like protein kinase 44 (379 aa).

Residues 56–336 form the Protein kinase domain; it reads FSPYNHLGEG…VRMLNANSFT (281 aa). ATP-binding positions include 62–70 and Lys-84; that span reads LGEGGFGAV. At Tyr-129 the chain carries Phosphotyrosine. The active-site Proton acceptor is Asp-181. Ser-185 carries the post-translational modification Phosphoserine. Position 223 is a phosphothreonine (Thr-223). Tyr-231 is modified (phosphotyrosine).

The protein belongs to the protein kinase superfamily. Ser/Thr protein kinase family. CRK subfamily.

The catalysed reaction is L-seryl-[protein] + ATP = O-phospho-L-seryl-[protein] + ADP + H(+). The enzyme catalyses L-threonyl-[protein] + ATP = O-phospho-L-threonyl-[protein] + ADP + H(+). The chain is Cysteine-rich receptor-like protein kinase 44 from Arabidopsis thaliana (Mouse-ear cress).